Consider the following 562-residue polypeptide: ATP-dependent RNA helicase dbp2 (562 aa).

Positions 132 to 160 (ETFDEAGFPRYVMDEVKAQGFPAPTAIQS) match the Q motif motif. Residues 163-338 (WPMALSGRDV…ADFLTDFIQV (176 aa)) enclose the Helicase ATP-binding domain. ATP is bound at residue 176–183 (AETGSGKT). The DEAD box signature appears at 286–289 (DEAD). The Helicase C-terminal domain occupies 370-515 (HLEKIMEGRE…QIDPRLAEMA (146 aa)). The segment at 526-548 (GGYRGRGGGGWRGGRGGGGGGGS) is RNA-binding RGG-box. The span at 536 to 550 (WRGGRGGGGGGGSVG) shows a compositional bias: gly residues. Positions 536 to 562 (WRGGRGGGGGGGSVGGANALPLNNRRW) are disordered.

It belongs to the DEAD box helicase family. DDX5/DBP2 subfamily. Associates with polysomes.

Its subcellular location is the cytoplasm. The protein localises to the nucleus. It catalyses the reaction ATP + H2O = ADP + phosphate + H(+). In terms of biological role, ATP-dependent RNA helicase involved nonsense-mediated mRNA decay and ribosome biogenesis through rRNA processing. The protein is ATP-dependent RNA helicase dbp2 (drh-1) of Neurospora crassa (strain ATCC 24698 / 74-OR23-1A / CBS 708.71 / DSM 1257 / FGSC 987).